The following is an 815-amino-acid chain: Leucine--tRNA ligase (815 aa).

The 'HIGH' region signature appears at 42–52 (PYPSGRLHMGH). Positions 574-578 (KMSKS) match the 'KMSKS' region motif. Lysine 577 serves as a coordination point for ATP.

This sequence belongs to the class-I aminoacyl-tRNA synthetase family.

The protein resides in the cytoplasm. The catalysed reaction is tRNA(Leu) + L-leucine + ATP = L-leucyl-tRNA(Leu) + AMP + diphosphate. This chain is Leucine--tRNA ligase, found in Alcanivorax borkumensis (strain ATCC 700651 / DSM 11573 / NCIMB 13689 / SK2).